Here is a 1090-residue protein sequence, read N- to C-terminus: Vinculin (1090 aa).

2 consecutive repeat copies span residues 339–446 and 455–561. The segment at 339–561 is 2 X repeats; sequence DADNVTVMRK…LKNALRDLGD (223 aa). 2 disordered regions span residues 811-842 and 864-895; these read GVPM…SQVI and DIPA…EEET. Over residues 817–830 the composition is skewed to polar residues; it reads GRHSSYQESISRAS. Pro residues predominate over residues 866–887; it reads PAPPRPPPPVELSPPPRPPPPP.

It belongs to the vinculin/alpha-catenin family. In terms of assembly, may interact with sorb-1. Expressed in gonadal sheath cells and the spermatheca. Expressed in body wall muscles.

It is found in the cytoplasm. Its subcellular location is the cytoskeleton. The protein resides in the cell junction. It localises to the adherens junction. The protein localises to the cell membrane. It is found in the focal adhesion. Its function is as follows. Involved in cell adhesion. May be involved in the attachment of the actin-based microfilaments to the plasma membrane. Involved in ovulation. In Caenorhabditis elegans, this protein is Vinculin.